Here is a 148-residue protein sequence, read N- to C-terminus: D-aminoacyl-tRNA deacylase (148 aa).

The Gly-cisPro motif, important for rejection of L-amino acids motif lies at 137 to 138; it reads GP.

This sequence belongs to the DTD family. In terms of assembly, homodimer.

It localises to the cytoplasm. The catalysed reaction is glycyl-tRNA(Ala) + H2O = tRNA(Ala) + glycine + H(+). It catalyses the reaction a D-aminoacyl-tRNA + H2O = a tRNA + a D-alpha-amino acid + H(+). In terms of biological role, an aminoacyl-tRNA editing enzyme that deacylates mischarged D-aminoacyl-tRNAs. Also deacylates mischarged glycyl-tRNA(Ala), protecting cells against glycine mischarging by AlaRS. Acts via tRNA-based rather than protein-based catalysis; rejects L-amino acids rather than detecting D-amino acids in the active site. By recycling D-aminoacyl-tRNA to D-amino acids and free tRNA molecules, this enzyme counteracts the toxicity associated with the formation of D-aminoacyl-tRNA entities in vivo and helps enforce protein L-homochirality. In Enterococcus faecalis (strain ATCC 700802 / V583), this protein is D-aminoacyl-tRNA deacylase.